A 316-amino-acid chain; its full sequence is Lipoyl synthase (316 aa).

A compositionally biased stretch (basic and acidic residues) spans 1-15 (MKARNESMSKGEYKT). The disordered stretch occupies residues 1 to 33 (MKARNESMSKGEYKTKSLKNRPDPTQPKLKKPS). Residues C64, C69, C75, C90, C94, C97, and S304 each coordinate [4Fe-4S] cluster. In terms of domain architecture, Radical SAM core spans 76-293 (FGHGTATFMI…EQAGMEMGFT (218 aa)).

This sequence belongs to the radical SAM superfamily. Lipoyl synthase family. [4Fe-4S] cluster is required as a cofactor.

Its subcellular location is the cytoplasm. It catalyses the reaction [[Fe-S] cluster scaffold protein carrying a second [4Fe-4S](2+) cluster] + N(6)-octanoyl-L-lysyl-[protein] + 2 oxidized [2Fe-2S]-[ferredoxin] + 2 S-adenosyl-L-methionine + 4 H(+) = [[Fe-S] cluster scaffold protein] + N(6)-[(R)-dihydrolipoyl]-L-lysyl-[protein] + 4 Fe(3+) + 2 hydrogen sulfide + 2 5'-deoxyadenosine + 2 L-methionine + 2 reduced [2Fe-2S]-[ferredoxin]. It participates in protein modification; protein lipoylation via endogenous pathway; protein N(6)-(lipoyl)lysine from octanoyl-[acyl-carrier-protein]: step 2/2. Functionally, catalyzes the radical-mediated insertion of two sulfur atoms into the C-6 and C-8 positions of the octanoyl moiety bound to the lipoyl domains of lipoate-dependent enzymes, thereby converting the octanoylated domains into lipoylated derivatives. This is Lipoyl synthase from Hydrogenovibrio crunogenus (strain DSM 25203 / XCL-2) (Thiomicrospira crunogena).